Consider the following 291-residue polypeptide: Undecaprenyl-diphosphatase (291 aa).

8 consecutive transmembrane segments (helical) span residues 1-21, 48-68, 102-122, 126-146, 162-182, 203-223, 231-251, and 267-287; these read MFII…LTEF, SAFT…AWVF, LHVL…DDFI, LFSV…MIIA, ISYF…WPGF, SDFT…LSLL, IADI…GLIA, and FAIY…GFGI.

This sequence belongs to the UppP family.

It localises to the cell membrane. The enzyme catalyses di-trans,octa-cis-undecaprenyl diphosphate + H2O = di-trans,octa-cis-undecaprenyl phosphate + phosphate + H(+). Catalyzes the dephosphorylation of undecaprenyl diphosphate (UPP). Confers resistance to bacitracin. This is Undecaprenyl-diphosphatase from Staphylococcus aureus (strain MRSA252).